The sequence spans 548 residues: uncharacterized protein (548 aa).

A DhaL domain is found at 8-200; the sequence is KLFADMIIQG…LLCVYEGFLK (193 aa).

This is an uncharacterized protein from Staphylococcus aureus (strain MRSA252).